We begin with the raw amino-acid sequence, 290 residues long: 33 kDa chaperonin (290 aa).

Intrachain disulfides connect Cys235–Cys237 and Cys268–Cys271.

This sequence belongs to the HSP33 family. In terms of processing, under oxidizing conditions two disulfide bonds are formed involving the reactive cysteines. Under reducing conditions zinc is bound to the reactive cysteines and the protein is inactive.

The protein localises to the cytoplasm. Its function is as follows. Redox regulated molecular chaperone. Protects both thermally unfolding and oxidatively damaged proteins from irreversible aggregation. Plays an important role in the bacterial defense system toward oxidative stress. This Streptococcus pneumoniae (strain CGSP14) protein is 33 kDa chaperonin.